We begin with the raw amino-acid sequence, 262 residues long: Thiazole synthase (262 aa).

Residue Lys-105 is the Schiff-base intermediate with DXP of the active site. 1-deoxy-D-xylulose 5-phosphate is bound by residues Gly-166, 192–193 (AG), and 214–215 (NT).

It belongs to the ThiG family. In terms of assembly, homotetramer. Forms heterodimers with either ThiH or ThiS.

Its subcellular location is the cytoplasm. The enzyme catalyses [ThiS sulfur-carrier protein]-C-terminal-Gly-aminoethanethioate + 2-iminoacetate + 1-deoxy-D-xylulose 5-phosphate = [ThiS sulfur-carrier protein]-C-terminal Gly-Gly + 2-[(2R,5Z)-2-carboxy-4-methylthiazol-5(2H)-ylidene]ethyl phosphate + 2 H2O + H(+). It functions in the pathway cofactor biosynthesis; thiamine diphosphate biosynthesis. Its function is as follows. Catalyzes the rearrangement of 1-deoxy-D-xylulose 5-phosphate (DXP) to produce the thiazole phosphate moiety of thiamine. Sulfur is provided by the thiocarboxylate moiety of the carrier protein ThiS. In vitro, sulfur can be provided by H(2)S. The protein is Thiazole synthase of Phenylobacterium zucineum (strain HLK1).